We begin with the raw amino-acid sequence, 222 residues long: Cytochrome b6 (222 aa).

Residues 39 to 59 (IFYCLGGITLVCFIIQFATGF) traverse the membrane as a helical segment. Residue cysteine 42 coordinates heme c. Histidine 93 and histidine 107 together coordinate heme b. 3 helical membrane passes run 97-117 (ASMM…TGGF), 123-143 (LTWI…VTGY), and 193-213 (LHTF…FLMI). Heme b contacts are provided by histidine 194 and histidine 209.

The protein belongs to the cytochrome b family. PetB subfamily. The 4 large subunits of the cytochrome b6-f complex are cytochrome b6, subunit IV (17 kDa polypeptide, PetD), cytochrome f and the Rieske protein, while the 4 small subunits are PetG, PetL, PetM and PetN. The complex functions as a dimer. It depends on heme b as a cofactor. Heme c serves as cofactor.

It localises to the cellular thylakoid membrane. In terms of biological role, component of the cytochrome b6-f complex, which mediates electron transfer between photosystem II (PSII) and photosystem I (PSI), cyclic electron flow around PSI, and state transitions. This is Cytochrome b6 from Prochlorothrix hollandica.